The following is a 908-amino-acid chain: Isoleucine--tRNA ligase (908 aa).

The 'HIGH' region motif lies at 59-69 (PYANGDLHIGH). Glutamate 554 contacts L-isoleucyl-5'-AMP. The 'KMSKS' region signature appears at 595–599 (KMSKS). Position 598 (lysine 598) interacts with ATP. Positions 882, 885, 898, and 901 each coordinate Zn(2+).

It belongs to the class-I aminoacyl-tRNA synthetase family. IleS type 1 subfamily. As to quaternary structure, monomer. The cofactor is Zn(2+).

It localises to the cytoplasm. It carries out the reaction tRNA(Ile) + L-isoleucine + ATP = L-isoleucyl-tRNA(Ile) + AMP + diphosphate. Catalyzes the attachment of isoleucine to tRNA(Ile). As IleRS can inadvertently accommodate and process structurally similar amino acids such as valine, to avoid such errors it has two additional distinct tRNA(Ile)-dependent editing activities. One activity is designated as 'pretransfer' editing and involves the hydrolysis of activated Val-AMP. The other activity is designated 'posttransfer' editing and involves deacylation of mischarged Val-tRNA(Ile). This Mesoplasma florum (strain ATCC 33453 / NBRC 100688 / NCTC 11704 / L1) (Acholeplasma florum) protein is Isoleucine--tRNA ligase.